The chain runs to 734 residues: Photosystem I P700 chlorophyll a apoprotein A2 (734 aa).

The next 8 membrane-spanning stretches (helical) occupy residues 46 to 69, 135 to 158, 175 to 199, 273 to 291, 330 to 353, 369 to 395, 417 to 439, and 517 to 535; these read IFAS…FHVA, LYTG…LHLQ, LNHH…HVAI, MAHH…GHMY, LHFQ…QHMY, AALY…IFFI, AIIS…LYVH, and FLVH…LILV. [4Fe-4S] cluster is bound by residues Cys-559 and Cys-568. Transmembrane regions (helical) follow at residues 575–596 and 643–665; these read AFYL…YWHW and LSVW…MFLI. Chlorophyll a is bound by residues His-654, Met-662, and Tyr-670. Trp-671 contributes to the phylloquinone binding site. Residues 707 to 727 form a helical membrane-spanning segment; sequence LVGLAHFSVGYIFTYAAFLIA.

It belongs to the PsaA/PsaB family. As to quaternary structure, the PsaA/B heterodimer binds the P700 chlorophyll special pair and subsequent electron acceptors. PSI consists of a core antenna complex that captures photons, and an electron transfer chain that converts photonic excitation into a charge separation. The eukaryotic PSI reaction center is composed of at least 11 subunits. P700 is a chlorophyll a/chlorophyll a' dimer, A0 is one or more chlorophyll a, A1 is one or both phylloquinones and FX is a shared 4Fe-4S iron-sulfur center. is required as a cofactor.

It localises to the plastid. The protein resides in the chloroplast thylakoid membrane. The catalysed reaction is reduced [plastocyanin] + hnu + oxidized [2Fe-2S]-[ferredoxin] = oxidized [plastocyanin] + reduced [2Fe-2S]-[ferredoxin]. Its function is as follows. PsaA and PsaB bind P700, the primary electron donor of photosystem I (PSI), as well as the electron acceptors A0, A1 and FX. PSI is a plastocyanin-ferredoxin oxidoreductase, converting photonic excitation into a charge separation, which transfers an electron from the donor P700 chlorophyll pair to the spectroscopically characterized acceptors A0, A1, FX, FA and FB in turn. Oxidized P700 is reduced on the lumenal side of the thylakoid membrane by plastocyanin. The chain is Photosystem I P700 chlorophyll a apoprotein A2 from Cucumis sativus (Cucumber).